A 179-amino-acid polypeptide reads, in one-letter code: Large ribosomal subunit protein uL6 (179 aa).

This sequence belongs to the universal ribosomal protein uL6 family. In terms of assembly, part of the 50S ribosomal subunit.

Functionally, this protein binds to the 23S rRNA, and is important in its secondary structure. It is located near the subunit interface in the base of the L7/L12 stalk, and near the tRNA binding site of the peptidyltransferase center. The protein is Large ribosomal subunit protein uL6 of Acidothermus cellulolyticus (strain ATCC 43068 / DSM 8971 / 11B).